We begin with the raw amino-acid sequence, 397 residues long: uncharacterized protein (397 aa).

Positions 368 to 391 (TTKPGLHQPTQKRPTQTTSKPYIN) are disordered. Residues 375-388 (QPTQKRPTQTTSKP) show a composition bias toward polar residues.

This is an uncharacterized protein from Acanthamoeba polyphaga mimivirus (APMV).